An 80-amino-acid chain; its full sequence is Large ribosomal subunit protein uL24 (80 aa).

Belongs to the universal ribosomal protein uL24 family. In terms of assembly, part of the 50S ribosomal subunit.

In terms of biological role, one of two assembly initiator proteins, it binds directly to the 5'-end of the 23S rRNA, where it nucleates assembly of the 50S subunit. Its function is as follows. One of the proteins that surrounds the polypeptide exit tunnel on the outside of the subunit. This is Large ribosomal subunit protein uL24 from Chlorobaculum tepidum (strain ATCC 49652 / DSM 12025 / NBRC 103806 / TLS) (Chlorobium tepidum).